We begin with the raw amino-acid sequence, 102 residues long: UPF0235 protein Noc_3000 (102 aa).

It belongs to the UPF0235 family.

This Nitrosococcus oceani (strain ATCC 19707 / BCRC 17464 / JCM 30415 / NCIMB 11848 / C-107) protein is UPF0235 protein Noc_3000.